The chain runs to 429 residues: MKKQNNLRSLAAQAVEQVVEQGQSLSNVLPPLQQKVADKDKALLQELCFGVLRTLSQLEWLINKLMSRPMTGKQRTVHYLIMVGFYQLLYTRVPPHAALAETVEGAVAIKRPQLKGLINGVLRQFQRQQETLLNEFATSDARFLHPGWLVKRLQNAYPTQWQHIIEANNQRPPMWLRVNRTHHTRDGWLGLLEDAGMKGYPHPDYPDAVRLETPAPVHALPGFAEGWVTVQDASAQGCAVFLAPQNGEHILDLCAAPGGKTTHILEVAPEADVLAVDIDEQRLSRVYDNLKRLGMKATVKQGDGRYPSQWCGEQQFDRILLDAPCSATGVIRRHPDIKWLRRDRDIAELAQLQAEILDAVWPRLKPGGTLVYATCSVLPEENRDQIKAFLQRTPDAALSETGTPDQPGQQNLPGGEEGDGFFYAKLIKK.

S-adenosyl-L-methionine contacts are provided by residues 254 to 260 (CAAPGGK), Asp277, Asp303, and Asp322. Cys375 acts as the Nucleophile in catalysis. Residues 397–419 (ALSETGTPDQPGQQNLPGGEEGD) form a disordered region. The span at 400–412 (ETGTPDQPGQQNL) shows a compositional bias: polar residues.

Belongs to the class I-like SAM-binding methyltransferase superfamily. RsmB/NOP family.

It is found in the cytoplasm. It carries out the reaction cytidine(967) in 16S rRNA + S-adenosyl-L-methionine = 5-methylcytidine(967) in 16S rRNA + S-adenosyl-L-homocysteine + H(+). Functionally, specifically methylates the cytosine at position 967 (m5C967) of 16S rRNA. The chain is Ribosomal RNA small subunit methyltransferase B from Salmonella newport (strain SL254).